The chain runs to 318 residues: Protein-L-histidine N-pros-methyltransferase (318 aa).

An N-terminal signal peptide occupies residues 1 to 18 (MRLLAGWLCLSLASVWLA). Asn-35 carries N-linked (GlcNAc...) asparagine glycosylation. Residues Glu-174, Asn-210, and Tyr-295 each coordinate S-adenosyl-L-homocysteine.

The protein belongs to the METTL9 family.

It is found in the endoplasmic reticulum. The protein localises to the mitochondrion. It carries out the reaction L-histidyl-[protein] + S-adenosyl-L-methionine = N(pros)-methyl-L-histidyl-[protein] + S-adenosyl-L-homocysteine + H(+). In terms of biological role, protein-histidine N-methyltransferase that specifically catalyzes 1-methylhistidine (pros-methylhistidine) methylation of target proteins. Specifically methylates the second His of proteins with a His-x-His (HxH) motif (where 'x' is preferably a small amino acid), while exploiting the first one as a recognition signature. Catalyzes methylation of target proteins such as S100A9, NDUFB3, SLC39A5, SLC39A7, ARMC6 and DNAJB12; 1-methylhistidine modification may affect the binding of zinc and other metals to its target proteins. Constitutes the main methyltransferase for the 1-methylhistidine modification in cell. In Bos taurus (Bovine), this protein is Protein-L-histidine N-pros-methyltransferase.